A 325-amino-acid chain; its full sequence is Phenylalanine--tRNA ligase alpha subunit (325 aa).

E251 provides a ligand contact to Mg(2+).

Belongs to the class-II aminoacyl-tRNA synthetase family. Phe-tRNA synthetase alpha subunit type 1 subfamily. In terms of assembly, tetramer of two alpha and two beta subunits. It depends on Mg(2+) as a cofactor.

The protein localises to the cytoplasm. The catalysed reaction is tRNA(Phe) + L-phenylalanine + ATP = L-phenylalanyl-tRNA(Phe) + AMP + diphosphate + H(+). This Thermotoga maritima (strain ATCC 43589 / DSM 3109 / JCM 10099 / NBRC 100826 / MSB8) protein is Phenylalanine--tRNA ligase alpha subunit (pheS).